The primary structure comprises 219 residues: Pollen-specific protein SF3 (219 aa).

LIM zinc-binding domains follow at residues 9 to 109 and 110 to 167; these read QKCT…TRDK and CNAC…QLFK. Positions 181-219 are disordered; it reads VAAPAESETQNTETQNAETQNADTQNADTQNTETQNGSV. The span at 185 to 202 shows a compositional bias: low complexity; it reads AESETQNTETQNAETQNA. The span at 203–219 shows a compositional bias: polar residues; sequence DTQNADTQNTETQNGSV.

Pollen.

In terms of biological role, could possibly involved in controlling pollen-specific processes such as male gamete maturation, pollen tube formation, or even fertilization. This chain is Pollen-specific protein SF3 (SF3), found in Helianthus annuus (Common sunflower).